Here is a 138-residue protein sequence, read N- to C-terminus: Acidic phospholipase A2 CH-E6' (138 aa).

Residues Met-1 to Gly-16 form the signal peptide. 7 disulfides stabilise this stretch: Cys-42-Cys-131, Cys-44-Cys-60, Cys-59-Cys-111, Cys-65-Cys-138, Cys-66-Cys-104, Cys-73-Cys-97, and Cys-91-Cys-102. Tyr-43, Gly-45, and Gly-47 together coordinate Ca(2+). His-63 is an active-site residue. Asp-64 lines the Ca(2+) pocket. The active site involves Asp-105.

It belongs to the phospholipase A2 family. Group II subfamily. D49 sub-subfamily. Requires Ca(2+) as cofactor. As to expression, expressed by the venom gland.

It is found in the secreted. The enzyme catalyses a 1,2-diacyl-sn-glycero-3-phosphocholine + H2O = a 1-acyl-sn-glycero-3-phosphocholine + a fatty acid + H(+). Functionally, snake venom phospholipase A2 (PLA2) that shows high lipolytic and weak ADP-induced platelet aggregation activities. Also shows weak anticoagulant activity. PLA2 catalyzes the calcium-dependent hydrolysis of the 2-acyl groups in 3-sn-phosphoglycerides. In Crotalus horridus (Timber rattlesnake), this protein is Acidic phospholipase A2 CH-E6'.